Here is a 276-residue protein sequence, read N- to C-terminus: S-adenosylmethionine decarboxylase proenzyme (276 aa).

Residue Ser124 is the Schiff-base intermediate with substrate; via pyruvic acid of the active site. At Ser124 the chain carries Pyruvic acid (Ser); by autocatalysis. His129 (proton acceptor; for processing activity) is an active-site residue. Cys152 serves as the catalytic Proton donor; for catalytic activity.

This sequence belongs to the prokaryotic AdoMetDC family. Type 2 subfamily. Heterooctamer of four alpha and four beta chains arranged as a tetramer of alpha/beta heterodimers. Pyruvate serves as cofactor. Post-translationally, is synthesized initially as an inactive proenzyme. Formation of the active enzyme involves a self-maturation process in which the active site pyruvoyl group is generated from an internal serine residue via an autocatalytic post-translational modification. Two non-identical subunits are generated from the proenzyme in this reaction, and the pyruvate is formed at the N-terminus of the alpha chain, which is derived from the carboxyl end of the proenzyme. The post-translation cleavage follows an unusual pathway, termed non-hydrolytic serinolysis, in which the side chain hydroxyl group of the serine supplies its oxygen atom to form the C-terminus of the beta chain, while the remainder of the serine residue undergoes an oxidative deamination to produce ammonia and the pyruvoyl group blocking the N-terminus of the alpha chain.

It carries out the reaction S-adenosyl-L-methionine + H(+) = S-adenosyl 3-(methylsulfanyl)propylamine + CO2. It functions in the pathway amine and polyamine biosynthesis; S-adenosylmethioninamine biosynthesis; S-adenosylmethioninamine from S-adenosyl-L-methionine: step 1/1. In terms of biological role, catalyzes the decarboxylation of S-adenosylmethionine to S-adenosylmethioninamine (dcAdoMet), the propylamine donor required for the synthesis of the polyamines spermine and spermidine from the diamine putrescine. This chain is S-adenosylmethionine decarboxylase proenzyme, found in Desulfitobacterium hafniense (strain Y51).